Consider the following 752-residue polypeptide: Iron-sulfur clusters transporter ABCB7, mitochondrial (752 aa).

Residues 1 to 22 constitute a mitochondrion transit peptide; sequence MALLAIHSWRWAAAAVAFEKHK. The Mitochondrial matrix segment spans residues 23-140; sequence HSAVLTRSLV…KDRPDLRARV (118 aa). The 297-residue stretch at 140–436 folds into the ABC transmembrane type-1 domain; that stretch reads VAISLGFLGG…LGTVYRETRQ (297 aa). Residues 141-161 form a helical membrane-spanning segment; it reads AISLGFLGGAKAMNIVVPFMF. At 162-185 the chain is on the mitochondrial intermembrane side; that stretch reads KYAVDSLNQMSGNMLNLSDAPNTV. A helical membrane pass occupies residues 186–206; the sequence is ATMATAVLIGYGVSRAGAAFF. The Mitochondrial matrix portion of the chain corresponds to 207-259; it reads NEVRNAVFGKVAQNSIRRIAKNVFLHLHNLDLGFHLSRQTGALSKAIDRGTRG. Residues Lys216 and Lys251 each carry the N6-acetyllysine modification. The chain crosses the membrane as a helical span at residues 260-280; the sequence is ISFVLSALVFNLLPIVFEMTL. The Mitochondrial intermembrane portion of the chain corresponds to 281-290; the sequence is VSSVLYYKCG. A helical transmembrane segment spans residues 291-311; it reads AQFALVTLGTLGAYTAFTVAV. At 312-382 the chain is on the mitochondrial matrix side; that stretch reads TRWRTRFRIE…TLAMLNFGQS (71 aa). Position 315–319 (315–319) interacts with glutathione; the sequence is RTRFR. Ser336 is subject to Phosphoserine. The residue at position 340 (Tyr340) is a Phosphotyrosine. A Phosphothreonine modification is found at Thr342. Lys350 carries the N6-acetyllysine modification. Position 378–381 (378–381) interacts with glutathione; sequence NFGQ. A helical transmembrane segment spans residues 383-403; that stretch reads AIFSVGLTAIMVLASQGIVAG. The Mitochondrial intermembrane segment spans residues 404 to 409; the sequence is ALTVGD. Residues 410 to 430 traverse the membrane as a helical segment; sequence LVMVNGLLFQLSLPLNFLGTV. Glutathione is bound at residue Gly428. The Mitochondrial matrix portion of the chain corresponds to 431–752; sequence YRETRQALID…SVKGCGNCSC (322 aa). The 235-residue stretch at 472-706 folds into the ABC transporter domain; it reads VAFDNVHFEY…SSSIYSEMWH (235 aa). ATP contacts are provided by residues Tyr481 and 505 to 516; that span reads GGSGSGKSTIVR.

Belongs to the ABC transporter superfamily. ABCB family. Heavy Metal importer (TC 3.A.1.210) subfamily. As to quaternary structure, homodimer or heterodimer. Interacts with C10orf88/PAAT. Forms a complex with ABCB10 and FECH, where a dimeric FECH bridges ABCB7 and ABCB10 homodimers; this complex may be required for cellular iron homeostasis, mitochondrial function and heme biosynthesis. Interacts with FECH. Interacts with ATP5F1A. Interacts with COX4I1; this interaction allows the regulation of cellular iron homeostasis and cellular reactive oxygen species (ROS) levels in cardiomyocytes.

The protein localises to the mitochondrion inner membrane. It carries out the reaction (glutathione)4[2Fe(III)-2S] cluster(in) + ATP + H2O = (glutathione)4[2Fe(III)-2S] cluster(out) + ADP + phosphate + H(+). Exports glutathione-coordinated iron-sulfur clusters such as [2Fe-2S]-(GS)4 cluster from the mitochondria to the cytosol in an ATP-dependent manner allowing the assembly of the cytosolic iron-sulfur (Fe/S) cluster-containing proteins and participates in iron homeostasis. Moreover, through a functional complex formed of ABCB7, FECH and ABCB10, also plays a role in the cellular iron homeostasis, mitochondrial function and heme biosynthesis. In cardiomyocytes, regulates cellular iron homeostasis and cellular reactive oxygen species (ROS) levels through its interaction with COX4I1. May also play a role in hematopoiesis. The polypeptide is Iron-sulfur clusters transporter ABCB7, mitochondrial (Rattus norvegicus (Rat)).